A 269-amino-acid chain; its full sequence is 4-hydroxy-tetrahydrodipicolinate reductase (269 aa).

Residues 10 to 15 and Glu-36 contribute to the NAD(+) site; that span reads GSSGRM. Position 37 (Arg-37) interacts with NADP(+). NAD(+) contacts are provided by residues 99–101 and 123–126; these read GTT and APNM. His-156 functions as the Proton donor/acceptor in the catalytic mechanism. His-157 lines the (S)-2,3,4,5-tetrahydrodipicolinate pocket. The Proton donor role is filled by Lys-160. Residue 166–167 coordinates (S)-2,3,4,5-tetrahydrodipicolinate; that stretch reads GT.

It belongs to the DapB family.

It is found in the cytoplasm. It catalyses the reaction (S)-2,3,4,5-tetrahydrodipicolinate + NAD(+) + H2O = (2S,4S)-4-hydroxy-2,3,4,5-tetrahydrodipicolinate + NADH + H(+). The catalysed reaction is (S)-2,3,4,5-tetrahydrodipicolinate + NADP(+) + H2O = (2S,4S)-4-hydroxy-2,3,4,5-tetrahydrodipicolinate + NADPH + H(+). It participates in amino-acid biosynthesis; L-lysine biosynthesis via DAP pathway; (S)-tetrahydrodipicolinate from L-aspartate: step 4/4. In terms of biological role, catalyzes the conversion of 4-hydroxy-tetrahydrodipicolinate (HTPA) to tetrahydrodipicolinate. This Nitrosospira multiformis (strain ATCC 25196 / NCIMB 11849 / C 71) protein is 4-hydroxy-tetrahydrodipicolinate reductase.